The chain runs to 239 residues: Lactate utilization protein A (239 aa).

It belongs to the LutA/YkgE family.

Functionally, is involved in L-lactate degradation and allows cells to grow with lactate as the sole carbon source. This Geobacillus kaustophilus (strain HTA426) protein is Lactate utilization protein A.